The following is a 301-amino-acid chain: Putative MgpC-like protein MPN_093 (301 aa).

The protein belongs to the MgpC family.

The polypeptide is Putative MgpC-like protein MPN_093 (Mycoplasma pneumoniae (strain ATCC 29342 / M129 / Subtype 1) (Mycoplasmoides pneumoniae)).